Here is a 669-residue protein sequence, read N- to C-terminus: p135Gag-Myb-Ets-transforming protein (669 aa).

Residues 1–10 (NSTMRRKVEQ) are compositionally biased toward basic and acidic residues. Disordered regions lie at residues 1–27 (NSTMRRKVEQEGYLQESSKAGLPSATT) and 132–153 (TQNHTANYPGWHSTTVADNTMT). Positions 90 to 142 (PAAAAIQRHYNDEDPEKEKRIKELELLLMSTENELKGQQALPTQNHTANYPGW) are transcriptional activation domain. Residues 276 to 361 (ATFSGFAKEQ…EHLEILQKEE (86 aa)) form the PNT domain. Residues 556–640 (GSGPIQLWQF…AGKRYVYRFV (85 aa)) constitute a DNA-binding region (ETS).

The protein localises to the host nucleus. DNA-binding protein that specifically recognizes the sequence 5'-YAAC[GT]G-3'. The Myb-Ets protein induces predominantly erythroblastosis in chicken and transforms avian erythroblasts and immature myelomonocytic cells in culture. It appears that the Ets domain is responsible for the effects on erythroid cells and that the Myb domain encodes the myeloid-transforming capacity. This chain is p135Gag-Myb-Ets-transforming protein (GAG), found in Avian leukemia virus E26.